Consider the following 132-residue polypeptide: uncharacterized protein (132 aa).

The chain crosses the membrane as a helical span at residues 105–125; the sequence is VHGYVVFWLSILCILIIIFVY.

It is found in the membrane. This is an uncharacterized protein from Methanocaldococcus jannaschii (strain ATCC 43067 / DSM 2661 / JAL-1 / JCM 10045 / NBRC 100440) (Methanococcus jannaschii).